The chain runs to 235 residues: Probable transglycosylase IsaA (235 aa).

The N-terminal stretch at Met1–Ala28 is a signal peptide. A compositionally biased stretch (polar residues) spans Glu95–Ala115. The segment at Glu95–Leu150 is disordered. Low complexity predominate over residues Ser117–Ser147.

It belongs to the transglycosylase family. IsaA subfamily.

The protein localises to the secreted. Functionally, is able to cleave peptidoglycan. In Staphylococcus epidermidis (strain ATCC 35984 / DSM 28319 / BCRC 17069 / CCUG 31568 / BM 3577 / RP62A), this protein is Probable transglycosylase IsaA (isaA).